The chain runs to 396 residues: MRKTMVISDLPHEIESEILSRVPTKSLAKLHTTCKRWYALFRDPRFVKKNFGKSERRLMLHSNFGVYKITDDLHGILNSGDPSLEFTSKLSNLKISEDLTITKIFHCDGLILCSTKENTRLVVWNPCTGQTRWIKPSKRYRSDDSYCLGYVNSKSSYHNYKILRYCFYYNDQDACVSEFEIYDFSSESWRVLDDYCTREWGLFCHGMSLKGNTYFVAGEKETGFFMLYFDFKTERFERLPLPYQSFDSEDTAVLSIVGGEKLAVLHQNIQSFSNEMRIWVTNKIDEAKDLTWSNFFLAVDYDIFNLPSVNNVTSFLLDEENKVAVCCDRHIDDEDKTRIYIVGVDLYKEVYKERTKGAHFNWPLLISYLPSLVHIQEKYPKDKRKGNKRRLVKRIT.

In terms of domain architecture, F-box spans 4-50; the sequence is TMVISDLPHEIESEILSRVPTKSLAKLHTTCKRWYALFRDPRFVKKN. Kelch repeat units lie at residues 163-209, 253-299, and 338-386; these read LRYC…GMSL, VLSI…FLAV, and RIYI…KRKG.

The chain is Putative F-box/kelch-repeat protein At3g17540 from Arabidopsis thaliana (Mouse-ear cress).